The primary structure comprises 462 residues: Hydroxymethylglutaryl-CoA synthase (462 aa).

Glutamate 92 (proton donor/acceptor) is an active-site residue. Cysteine 124 acts as the Acyl-thioester intermediate in catalysis. Residues cysteine 124, threonine 167, serine 219, histidine 257, lysine 266, asparagine 327, and serine 360 each contribute to the (3S)-3-hydroxy-3-methylglutaryl-CoA site. The active-site Proton donor/acceptor is the histidine 257. Lysine 408 participates in a covalent cross-link: Glycyl lysine isopeptide (Lys-Gly) (interchain with G-Cter in SUMO).

It belongs to the thiolase-like superfamily. HMG-CoA synthase family. Ubiquitinated.

The catalysed reaction is acetoacetyl-CoA + acetyl-CoA + H2O = (3S)-3-hydroxy-3-methylglutaryl-CoA + CoA + H(+). Its pathway is metabolic intermediate biosynthesis; (R)-mevalonate biosynthesis; (R)-mevalonate from acetyl-CoA: step 2/3. This enzyme condenses acetyl-CoA with acetoacetyl-CoA to form HMG-CoA, which is the substrate for HMG-CoA reductase. The polypeptide is Hydroxymethylglutaryl-CoA synthase (Caenorhabditis elegans).